Here is a 101-residue protein sequence, read N- to C-terminus: Ubiquitin-related modifier 1 (101 aa).

A 1-thioglycine modification is found at glycine 101. Glycine 101 participates in a covalent cross-link: Glycyl lysine isopeptide (Gly-Lys) (interchain with K-? in acceptor proteins).

Belongs to the URM1 family. As to quaternary structure, component of a complex at least composed of URM1, CTU2/NCS2 and CTU1/ATPBD3. Post-translationally, C-terminal thiocarboxylation occurs in 2 steps, it is first acyl-adenylated (-COAMP) via the hesA/moeB/thiF part of MOCS3, then thiocarboxylated (-COSH) via the rhodanese domain of MOCS3.

It localises to the cytoplasm. Its pathway is tRNA modification; 5-methoxycarbonylmethyl-2-thiouridine-tRNA biosynthesis. In terms of biological role, acts as a sulfur carrier required for 2-thiolation of mcm(5)S(2)U at tRNA wobble positions of cytosolic tRNA(Lys), tRNA(Glu) and tRNA(Gln). Serves as sulfur donor in tRNA 2-thiolation reaction by being thiocarboxylated (-COSH) at its C-terminus by MOCS3. The sulfur is then transferred to tRNA to form 2-thiolation of mcm(5)S(2)U. Also acts as a ubiquitin-like protein (UBL) that is covalently conjugated via an isopeptide bond to lysine residues of target proteins such as MOCS3, ATPBD3, CTU2, USP15 and CAS. The thiocarboxylated form serves as substrate for conjugation and oxidative stress specifically induces the formation of UBL-protein conjugates. This Homo sapiens (Human) protein is Ubiquitin-related modifier 1.